A 315-amino-acid chain; its full sequence is GTP cyclohydrolase MptA (315 aa).

The protein belongs to the GTP cyclohydrolase IV family. As to quaternary structure, homodimer. It depends on Fe(2+) as a cofactor.

It catalyses the reaction GTP + H2O = 7,8-dihydroneopterin 2',3'-cyclic phosphate + formate + diphosphate + H(+). It functions in the pathway cofactor biosynthesis; 5,6,7,8-tetrahydromethanopterin biosynthesis. Converts GTP to 7,8-dihydro-D-neopterin 2',3'-cyclic phosphate, the first intermediate in the biosynthesis of coenzyme methanopterin. This Methanococcus maripaludis (strain DSM 14266 / JCM 13030 / NBRC 101832 / S2 / LL) protein is GTP cyclohydrolase MptA.